The following is a 175-amino-acid chain: NADH-quinone oxidoreductase subunit I (175 aa).

4Fe-4S ferredoxin-type domains are found at residues 69 to 98 (KRDEQGRERCTACFCCMWICPANAIHIEAA) and 115 to 144 (KKFEINLLRCIFCGLCEEACPKGAIYLDGT). Residues cysteine 78, cysteine 81, cysteine 84, cysteine 88, cysteine 124, cysteine 127, cysteine 130, and cysteine 134 each contribute to the [4Fe-4S] cluster site.

This sequence belongs to the complex I 23 kDa subunit family. NDH-1 is composed of 14 different subunits. Subunits NuoA, H, J, K, L, M, N constitute the membrane sector of the complex. The cofactor is [4Fe-4S] cluster.

It is found in the cell inner membrane. The enzyme catalyses a quinone + NADH + 5 H(+)(in) = a quinol + NAD(+) + 4 H(+)(out). Functionally, NDH-1 shuttles electrons from NADH, via FMN and iron-sulfur (Fe-S) centers, to quinones in the respiratory chain. The immediate electron acceptor for the enzyme in this species is believed to be ubiquinone. Couples the redox reaction to proton translocation (for every two electrons transferred, four hydrogen ions are translocated across the cytoplasmic membrane), and thus conserves the redox energy in a proton gradient. This Leptospira biflexa serovar Patoc (strain Patoc 1 / Ames) protein is NADH-quinone oxidoreductase subunit I.